The chain runs to 113 residues: Large ribosomal subunit protein uL22 (113 aa).

The protein belongs to the universal ribosomal protein uL22 family. As to quaternary structure, part of the 50S ribosomal subunit.

In terms of biological role, this protein binds specifically to 23S rRNA; its binding is stimulated by other ribosomal proteins, e.g. L4, L17, and L20. It is important during the early stages of 50S assembly. It makes multiple contacts with different domains of the 23S rRNA in the assembled 50S subunit and ribosome. Its function is as follows. The globular domain of the protein is located near the polypeptide exit tunnel on the outside of the subunit, while an extended beta-hairpin is found that lines the wall of the exit tunnel in the center of the 70S ribosome. The polypeptide is Large ribosomal subunit protein uL22 (Herpetosiphon aurantiacus (strain ATCC 23779 / DSM 785 / 114-95)).